Reading from the N-terminus, the 68-residue chain is Large ribosomal subunit protein uL29 (68 aa).

Belongs to the universal ribosomal protein uL29 family.

The chain is Large ribosomal subunit protein uL29 from Parvibaculum lavamentivorans (strain DS-1 / DSM 13023 / NCIMB 13966).